The chain runs to 906 residues: Cadherin-2 (906 aa).

The N-terminal stretch at 1 to 25 (MCRIAGAPRTLLPLLAALLQASVEA) is a signal peptide. Residues 26–159 (SGEIALCKTG…HSGHLQRQKR (134 aa)) constitute a propeptide that is removed on maturation. 2 positions are modified to phosphoserine: S96 and S135. Cadherin domains lie at 160 to 267 (DWVI…RPEF), 268 to 382 (LHQV…PPEF), 383 to 497 (TAMT…NPYF), 498 to 603 (APNP…DNAP), and 604 to 714 (QVLP…DVDR). Residues 160–724 (DWVIPPINLP…IVGAGLGTGA (565 aa)) are Extracellular-facing. E170 contacts Ca(2+). N190 is a glycosylation site (N-linked (GlcNAc...) asparagine). Ca(2+)-binding residues include D226, E228, D259, M260, N261, D262, and N263. Residue N273 is glycosylated (N-linked (GlcNAc...) asparagine). Residues D293, D295, and N301 each coordinate Ca(2+). The N-linked (GlcNAc...) asparagine glycan is linked to N325. D353 lines the Ca(2+) pocket. N402, N572, N622, N651, and N692 each carry an N-linked (GlcNAc...) asparagine glycan. The helical transmembrane segment at 725-745 (IIAILLCIIILLILVLMFVVW) threads the bilayer. The Cytoplasmic segment spans residues 746–906 (MKRRDKERQA…LADMYGGGDD (161 aa)). Over residues 863-880 (SGSTAGSLSSLNSSSSGG) the composition is skewed to low complexity. The disordered stretch occupies residues 863–884 (SGSTAGSLSSLNSSSSGGEQDY).

In terms of assembly, homodimer (via extracellular region). Can also form heterodimers with other cadherins (via extracellular region). Dimerization occurs in trans, i.e. with a cadherin chain from another cell. Interacts with CDCP1. Interacts with PCDH8; this complex may also include TAOK2. The interaction with PCDH8 may lead to internalization through TAOK2/p38 MAPK pathway. Identified in a complex containing FGFR4, NCAM1, CDH2, PLCG1, FRS2, SRC, SHC1, GAP43 and CTTN. May interact with OBSCN (via protein kinase domain 2). Interacts with FBXO45. Cleaved by MMP24. Ectodomain cleavage leads to the generation of a soluble 90 kDa N-terminal soluble fragment and a 45 kDa membrane-bound C-terminal fragment 1 (CTF1), which is further cleaved by gamma-secretase into a 35 kDa. Cleavage in neural stem cells by MMP24 affects CDH2-mediated anchorage of neural stem cells to ependymocytes in the adult subependymal zone, leading to modulate neural stem cell quiescence.

Its subcellular location is the cell membrane. It localises to the sarcolemma. It is found in the cell junction. The protein resides in the cell surface. The protein localises to the desmosome. Its subcellular location is the adherens junction. Calcium-dependent cell adhesion protein; preferentially mediates homotypic cell-cell adhesion by dimerization with a CDH2 chain from another cell. Cadherins may thus contribute to the sorting of heterogeneous cell types. Acts as a regulator of neural stem cells quiescence by mediating anchorage of neural stem cells to ependymocytes in the adult subependymal zone: upon cleavage by MMP24, CDH2-mediated anchorage is affected, leading to modulate neural stem cell quiescence. Plays a role in cell-to-cell junction formation between pancreatic beta cells and neural crest stem (NCS) cells, promoting the formation of processes by NCS cells. Required for proper neurite branching. Required for pre- and postsynaptic organization. CDH2 may be involved in neuronal recognition mechanism. In hippocampal neurons, may regulate dendritic spine density. This is Cadherin-2 (CDH2) from Callithrix jacchus (White-tufted-ear marmoset).